Here is a 56-residue protein sequence, read N- to C-terminus: Large ribosomal subunit protein bL33 (56 aa).

The protein belongs to the bacterial ribosomal protein bL33 family.

This chain is Large ribosomal subunit protein bL33, found in Beutenbergia cavernae (strain ATCC BAA-8 / DSM 12333 / CCUG 43141 / JCM 11478 / NBRC 16432 / NCIMB 13614 / HKI 0122).